The primary structure comprises 468 residues: 6-phospho-beta-galactosidase (468 aa).

D-galactose 6-phosphate is bound by residues Q19, H116, N159, E160, and N297. The active-site Proton donor is the E160. E375 functions as the Nucleophile in the catalytic mechanism. D-galactose 6-phosphate is bound by residues S428, W429, K435, and Y437.

The protein belongs to the glycosyl hydrolase 1 family.

It catalyses the reaction a 6-phospho-beta-D-galactoside + H2O = D-galactose 6-phosphate + an alcohol. It functions in the pathway carbohydrate metabolism; lactose degradation; D-galactose 6-phosphate and beta-D-glucose from lactose 6-phosphate: step 1/1. The sequence is that of 6-phospho-beta-galactosidase from Streptococcus agalactiae serotype III (strain NEM316).